We begin with the raw amino-acid sequence, 309 residues long: Wall-associated proteinase (309 aa).

2 N-linked (GlcNAc...) asparagine glycosylation sites follow: Asn190 and Asn295.

Its subcellular location is the secreted. It localises to the cell wall. The protein localises to the membrane. Its function is as follows. May participate in wall plasticization and/or intussusception or in cell wall turnover. This is Wall-associated proteinase from Coccidioides immitis (strain RS) (Valley fever fungus).